Consider the following 676-residue polypeptide: tRNA uridine 5-carboxymethylaminomethyl modification enzyme MnmG (676 aa).

15–20 (GAGHAG) is an FAD binding site. An NAD(+)-binding site is contributed by 316–330 (GPRYCPSIEDKIVRF).

It belongs to the MnmG family. Homodimer. Heterotetramer of two MnmE and two MnmG subunits. FAD serves as cofactor.

It localises to the cytoplasm. Functionally, NAD-binding protein involved in the addition of a carboxymethylaminomethyl (cmnm) group at the wobble position (U34) of certain tRNAs, forming tRNA-cmnm(5)s(2)U34. The polypeptide is tRNA uridine 5-carboxymethylaminomethyl modification enzyme MnmG (Roseiflexus castenholzii (strain DSM 13941 / HLO8)).